We begin with the raw amino-acid sequence, 397 residues long: 1-deoxy-D-xylulose 5-phosphate reductoisomerase (397 aa).

The NADPH site is built by Thr10, Gly11, Ser12, Ile13, Gly36, Asn38, and Asn124. Lys125 serves as a coordination point for 1-deoxy-D-xylulose 5-phosphate. Glu126 serves as a coordination point for NADPH. Mn(2+) is bound at residue Asp150. 4 residues coordinate 1-deoxy-D-xylulose 5-phosphate: Ser151, Glu152, Ser186, and His209. Glu152 serves as a coordination point for Mn(2+). Residue Gly215 coordinates NADPH. Residues Ser222, Asn227, Lys228, and Glu231 each contribute to the 1-deoxy-D-xylulose 5-phosphate site. Residue Glu231 participates in Mn(2+) binding.

This sequence belongs to the DXR family. Mg(2+) serves as cofactor. Mn(2+) is required as a cofactor.

The catalysed reaction is 2-C-methyl-D-erythritol 4-phosphate + NADP(+) = 1-deoxy-D-xylulose 5-phosphate + NADPH + H(+). It participates in isoprenoid biosynthesis; isopentenyl diphosphate biosynthesis via DXP pathway; isopentenyl diphosphate from 1-deoxy-D-xylulose 5-phosphate: step 1/6. Functionally, catalyzes the NADPH-dependent rearrangement and reduction of 1-deoxy-D-xylulose-5-phosphate (DXP) to 2-C-methyl-D-erythritol 4-phosphate (MEP). This Photobacterium profundum (strain SS9) protein is 1-deoxy-D-xylulose 5-phosphate reductoisomerase.